A 320-amino-acid chain; its full sequence is Nucleotide-binding protein Pcryo_0127 (320 aa).

32-39 (GRSGSGKT) contacts ATP. Residue 82-85 (DIRT) coordinates GTP.

The protein belongs to the RapZ-like family.

Displays ATPase and GTPase activities. The protein is Nucleotide-binding protein Pcryo_0127 of Psychrobacter cryohalolentis (strain ATCC BAA-1226 / DSM 17306 / VKM B-2378 / K5).